Reading from the N-terminus, the 256-residue chain is Short-chain dehydrogenase/reductase cdmF (256 aa).

The NADP(+) site is built by V11, D57, and R119. The Proton donor role is filled by S137. 4 residues coordinate NADP(+): Y151, K155, G183, and N187. Catalysis depends on Y151, which acts as the Proton acceptor. K155 (lowers pKa of active site Tyr) is an active-site residue.

It belongs to the short-chain dehydrogenases/reductases (SDR) family.

The enzyme catalyses 3-hydroxypentacecilide A + A = chrodrimanin C + AH2. It carries out the reaction chrodrimanin F + A = chrodrimanin H + AH2. It participates in secondary metabolite biosynthesis; terpenoid biosynthesis. Functionally, short-chain dehydrogenase/reductase; part of the gene cluster that mediates the biosynthesis of chrodrimanin B, a meroterpenoid that acts as a potent blocker of insect GABA-gated chloride channels. The first step of the pathway is the biosynthesis of 6-hydroxymellein by the polyketide synthase cdmE. The prenyltransferase cdmH acts as a 6-hydroxymellein 5-farnesyltransferase and produces the hydrophobic metabolite verruculide C. The FAD-dependent monooxygenase cdmI further converts verruculide C into verruculide B. The terpene cyclase cdmG then produced the pentacyclic molecule 3-hydroxypentacecilide A, the backbone structure of chrodrimanin B, via folding the farnesyl moiety of the substrate into the chair-boat conformation. The short-chain dehydrogenase/reductase cdmF functions as the 3-OH dehydrogenase that oxidizes the C-3 hydroxyl group of 3-hydroxypentacecilide A and produces chrodrimanin C, the dehydrogenated product of 3-hydroxypentacecilide A. The cytochrome P450 monooxygenase cdmJ then accepts both 3-hydroxypentacecilide A and chrodrimanin C and functions as a C-7-beta-hydroxylase to produce respectively chrodrimanin H and chrodrimanin F. The dioxygenase cdmA accepts chrodrimanin H to afford chrodrimanin E, which is further transformed to chrodrimanin A by the dioxygenase cdmD. CdmA can also accept chrodrimanin C as substrate to convert it into verruculide A, which is further converted into chrodrimanin T by cdmD. The last step of the biosynthesis is proposed to be performed by the acetyltransferase cdmC which acetylates chrodrimanin A to yield chrodrimanin B. The pathway may also lead to the production of additional shunt products, including chrodrimanins T and U. The sequence is that of Short-chain dehydrogenase/reductase cdmF from Talaromyces verruculosus (Penicillium verruculosum).